We begin with the raw amino-acid sequence, 95 residues long: NADH-quinone oxidoreductase subunit K (95 aa).

Transmembrane regions (helical) follow at residues 1–21 (MSYL…VLTR), 25–45 (ILVF…LVGF), and 59–79 (MVIA…VAIF).

This sequence belongs to the complex I subunit 4L family. In terms of assembly, NDH-1 is composed of 15 different subunits. Subunits NuoA, H, J, K, L, M, N constitute the membrane sector of the complex.

The protein localises to the cell inner membrane. The catalysed reaction is a quinone + NADH + 5 H(+)(in) = a quinol + NAD(+) + 4 H(+)(out). In terms of biological role, NDH-1 shuttles electrons from NADH, via FMN and iron-sulfur (Fe-S) centers, to quinones in the respiratory chain. The immediate electron acceptor for the enzyme in this species is believed to be a menaquinone. Couples the redox reaction to proton translocation (for every two electrons transferred, four hydrogen ions are translocated across the cytoplasmic membrane), and thus conserves the redox energy in a proton gradient. The sequence is that of NADH-quinone oxidoreductase subunit K from Thermus thermophilus (strain ATCC BAA-163 / DSM 7039 / HB27).